A 435-amino-acid chain; its full sequence is MSSVPEPSAALLQRAVAVRRAAVDLGQTDDGQRALALQAMADALTERAATILAANREDLERSAGEGLAPALMARLKLDDTKLAAAIDGVRKVASLSDPLGCRQLHRELDQGLVLERVSVPLGVVGVIFEARPDAVMQIASLAIRSGNGALLKGGSEARCTNEAVMDALQAGLAASPVSADALALLTTRQESLALLRLDGLVDLIIPRGSNELVRFIQDNTRIPVLGHADGVCHLYVDAAADIAKAVRVAVDSKSQYPAACNAIETLLVHRSIAQPFLAAALPAFAAAGVKLRGDAESVALGVAEAATEEDWSTEYLDLILAVKLVDDLEAATDHIRSYGSRHTEVILTEDAQTADRFLAAVDSAGVYHNCSSRFADGFRYGFGAEVGISTQTLPPRGPVGLEGLVTYRYRLRGEGHITADYANGSCVFTHIDRPL.

The protein belongs to the gamma-glutamyl phosphate reductase family.

It localises to the cytoplasm. The enzyme catalyses L-glutamate 5-semialdehyde + phosphate + NADP(+) = L-glutamyl 5-phosphate + NADPH + H(+). The protein operates within amino-acid biosynthesis; L-proline biosynthesis; L-glutamate 5-semialdehyde from L-glutamate: step 2/2. Functionally, catalyzes the NADPH-dependent reduction of L-glutamate 5-phosphate into L-glutamate 5-semialdehyde and phosphate. The product spontaneously undergoes cyclization to form 1-pyrroline-5-carboxylate. This Synechococcus sp. (strain CC9605) protein is Gamma-glutamyl phosphate reductase.